Consider the following 376-residue polypeptide: uncharacterized protein (376 aa).

The residue at position 59 (Ser-59) is a Phosphoserine. The region spanning 139-367 is the Rho-GAP domain; sequence VAIEITVQRQ…CLIEHHNAIF (229 aa). The interval 307 to 338 is disordered; sequence RPSRSPKKSNDFETATPWDLLSDEGEGPDASS.

This is an uncharacterized protein from Arabidopsis thaliana (Mouse-ear cress).